A 782-amino-acid polypeptide reads, in one-letter code: uncharacterized protein (782 aa).

The segment at residues 22 to 50 (CRECHRLKLKCDRVWPCENCKKRGIPNLC) is a DNA-binding region (zn(2)-C6 fungal-type). 2 disordered regions span residues 105-126 (GEKPAEDTKDENRSQPIHDPDH) and 645-665 (VPSSRPNSKSPDDSSMRAEKA). Basic and acidic residues predominate over residues 654 to 665 (SPDDSSMRAEKA).

It is found in the nucleus. This is an uncharacterized protein from Schizosaccharomyces pombe (strain 972 / ATCC 24843) (Fission yeast).